We begin with the raw amino-acid sequence, 194 residues long: RNA polymerase II subunit A C-terminal domain phosphatase SSU72 like protein 2 (194 aa).

The protein belongs to the SSU72 phosphatase family.

The protein localises to the nucleus. It catalyses the reaction O-phospho-L-seryl-[protein] + H2O = L-seryl-[protein] + phosphate. It carries out the reaction O-phospho-L-threonyl-[protein] + H2O = L-threonyl-[protein] + phosphate. In terms of biological role, protein phosphatase that catalyzes the dephosphorylation of the C-terminal domain of RNA polymerase II. Plays a role in RNA processing and termination. The sequence is that of RNA polymerase II subunit A C-terminal domain phosphatase SSU72 like protein 2 from Homo sapiens (Human).